Consider the following 213-residue polypeptide: MKRKTAVKWLAVLAGAGLLYWGNKTYLNVSPKEIRVWVLSFGVFAPLMFIGISIVRPLVLFPVSVISIAGGLAFGPLLGTLYTLFGSMCASAVSFFAAGLFSAKKNGHYERLEAIQKQMEDNGFFYIFLLRILPINFDFVSYAAGLSNVKALPYFAATAVGIIPGTIALNVLGASFLAGNLPAFFMVLALYIVFISLPFIFRKKMQNLFQESN.

The next 6 membrane-spanning stretches (helical) occupy residues 9 to 29 (WLAVLAGAGLLYWGNKTYLNV), 34 to 54 (IRVWVLSFGVFAPLMFIGISI), 58 to 78 (LVLFPVSVISIAGGLAFGPLL), 81 to 101 (LYTLFGSMCASAVSFFAAGLF), 159 to 179 (AVGIIPGTIALNVLGASFLAG), and 181 to 201 (LPAFFMVLALYIVFISLPFIF).

This sequence belongs to the TVP38/TMEM64 family.

The protein localises to the cell membrane. The polypeptide is TVP38/TMEM64 family membrane protein YtxB (ytxB) (Bacillus subtilis (strain 168)).